Consider the following 305-residue polypeptide: Transcription factor MYB87 (305 aa).

2 consecutive HTH myb-type domains span residues 9-66 (KMAV…RPNL) and 67-117 (KHGG…KKKL). 2 consecutive DNA-binding regions (H-T-H motif) follow at residues 38–62 (WISL…LNYL) and 90–113 (WSII…NTRL).

In terms of tissue distribution, expressed in roots, leaves, internodes, shoot tips and flowers.

The protein localises to the nucleus. Its function is as follows. Transcription factor that functions as a regulator of genes affecting cell wall organization and remodeling. Activates genes related to the primary cell wall and represses genes related to the secondary cell wall and expansins. Required for the regulation of longitudinal cell growth in stems, leaves, petioles, roots, flowers and siliques. This is Transcription factor MYB87 from Arabidopsis thaliana (Mouse-ear cress).